A 708-amino-acid chain; its full sequence is MAAAGPSTRASSAAAAAALSRRGRRGRCDETAAAKTGAPGPASGPSLLVLSPPLLQPPLPPRPEESGCAGCLEPPGEAAALPCGHSLCRGCAQRAADAAGPGCPRCRARGPGWARRRARDDGQADSEVLGECARRSQPERCRPRRDGGAAAAGPRPEQEPRAAPAEPDFIFRAPIKLSKPGELREEYESLRKLREEKLQEEKPSEDQIHKLLPEDTETGKRKMDEQKKRDEPLVLKTNLERCPARLSDSENEEPSRGQMTQTHRSAFVSKNNSYSLAFLAGKLNSKVERSQSCSDTAQERAKSRVRAVPGNKAKVTTMTPASNPIIGVLLSTQNNRCVSAPDLTIEKRLPFSSLSSLASLHKPERSVSPESNDSISEELNHFKPIVCSPCTPPKRLPDGRVLSPLIIKSTPRNLNRSLQKQTSYEASPRILKKWEQIFQERQIKKTLSKATLTSLAPEMGEELLGSEGIHSSKEKPLVAVNTRLSGGQVLSEYTGPTSADLDHFPSVSQTKAEQDSDNKSSTEIPLETCCSSELKGGGSGTSLEREQFEGLGSTPDAKLDKTCISRAMKITTVNSVLPQNSVLGGVLKTKQQLKTLNHFDLTNGVLVESLSEEPLPSLRRGRKRHCKTKHLEQNGSLKKLRQTSGEVGLAPTDPVLREMEQKLQQEEEDRQLALQLQRMFDNERRTVSRRKGSVDQYLLRSSNMAGAK.

Composition is skewed to low complexity over residues 1–20 (MAAA…AALS) and 33–53 (AAKT…LSPP). Disordered regions lie at residues 1 to 71 (MAAA…CAGC), 96 to 169 (ADAA…EPDF), and 195 to 262 (EEKL…MTQT). Ser12 is modified (phosphoserine). The RING-type zinc finger occupies 68-107 (CAGCLEPPGEAAALPCGHSLCRGCAQRAADAAGPGCPRCR). Over residues 132-147 (CARRSQPERCRPRRDG) the composition is skewed to basic and acidic residues. Residues 148–167 (GAAAAGPRPEQEPRAAPAEP) are compositionally biased toward low complexity. Over residues 195–243 (EEKLQEEKPSEDQIHKLLPEDTETGKRKMDEQKKRDEPLVLKTNLERCP) the composition is skewed to basic and acidic residues. Residues 205-213 (EDQIHKLLP) carry the UMI motif motif. A phosphoserine mark is found at Ser247 and Ser249. Lys286 is covalently cross-linked (Glycyl lysine isopeptide (Lys-Gly) (interchain with G-Cter in SUMO2)). Ser339 is modified (phosphoserine). A Glycyl lysine isopeptide (Lys-Gly) (interchain with G-Cter in SUMO2) cross-link involves residue Lys362. Phosphoserine is present on residues Ser368, Ser403, and Ser409. Position 410 is a phosphothreonine (Thr410). Position 485 is a phosphoserine (Ser485). Residues 491 to 555 (SEYTGPTSAD…EQFEGLGSTP (65 aa)) are disordered. Lys511 participates in a covalent cross-link: Glycyl lysine isopeptide (Lys-Gly) (interchain with G-Cter in SUMO2). Phosphothreonine is present on Thr554. Phosphoserine is present on Ser644. Residues 665-682 (QEEEDRQLALQLQRMFDN) carry the MIU motif motif. An LR motif motif is present at residues 689–701 (RRKGSVDQYLLRS). A Phosphoserine modification is found at Ser693.

The protein belongs to the RNF169 family. Interacts with DYRK1B. Phosphorylated by DYRK1A; phosphorylation increases RNF169 ability to block accumulation of TP53BP1 at the DSB sites.

The protein resides in the chromosome. Its subcellular location is the nucleus. It is found in the nucleoplasm. The catalysed reaction is S-ubiquitinyl-[E2 ubiquitin-conjugating enzyme]-L-cysteine + [acceptor protein]-L-lysine = [E2 ubiquitin-conjugating enzyme]-L-cysteine + N(6)-ubiquitinyl-[acceptor protein]-L-lysine.. Its pathway is protein modification; protein ubiquitination. In terms of biological role, probable E3 ubiquitin-protein ligase that acts as a regulator of double-strand breaks (DSBs) repair following DNA damage. Functions in a non-canonical fashion to harness RNF168-mediated protein recruitment to DSB-containing chromatin, thereby contributing to regulation of DSB repair pathway utilization. Once recruited to DSB repair sites by recognizing and binding ubiquitin catalyzed by RNF168, competes with TP53BP1 and BRCA1 for association with RNF168-modified chromatin, thereby favouring homologous recombination repair (HRR) and single-strand annealing (SSA) instead of non-homologous end joining (NHEJ) mediated by TP53BP1. E3 ubiquitin-protein ligase activity is not required for regulation of DSBs repair. This chain is E3 ubiquitin-protein ligase RNF169 (RNF169), found in Homo sapiens (Human).